Reading from the N-terminus, the 590-residue chain is Negative elongation factor D (590 aa).

A disordered region spans residues 15-43 (FGSAAEWGDEADGGQQEDDYGEGEDDAEV). Residues 21 to 43 (WGDEADGGQQEDDYGEGEDDAEV) are compositionally biased toward acidic residues.

Belongs to the NELF-D family. The NELF complex is composed of NELFA, NELFB, NELFCD and NELFE; NELFA and NELFCD form a stable subcomplex that binds primarily through NELFCD to the N-terminus of NELFB. Binds RNA which may help to stabilize the NELF complex on nucleic acid. In vitro, the NELFA:NELFCD subcomplex binds to ssDNA and ssRNA in a sequence- and structure-dependent manner. Interacts with ARAF1. Interacts with PCF11. Interacts with NELFB. Interacts with KAT8.

The protein localises to the nucleus. Its function is as follows. Essential component of the NELF complex, a complex that negatively regulates the elongation of transcription by RNA polymerase II. The NELF complex, which acts via an association with the DSIF complex and causes transcriptional pausing, is counteracted by the P-TEFb kinase complex. The protein is Negative elongation factor D (NELFCD) of Sus scrofa (Pig).